The chain runs to 182 residues: MSNFLRKKLHLCFSSSGGLSPSIPSSPIIVSNHNAQSHPHHTPSIFINNFNSLYDQLSVSSPLHRRHSSENPAGVFSTNRREEEEEDETTTSVSKLLSGGTAIMKHIESPDPYRDFGRSMREMVEARDLTRDVVADREYLHELLFCYLYLNPKHTHRFIVSAFADTLLWLLSPSPSPEHFLS.

The disordered stretch occupies residues Pro62–Ser94. The OVATE domain occupies Met104–Trp169.

As to expression, expressed in roots, rosette and cauline leaves, shoots, stems, flower buds and siliques.

The protein localises to the nucleus. Functionally, transcriptional repressor that may regulate multiple aspects of plant growth and development through the regulation of BEL1-LIKE (BLH) and KNOX TALE (KNAT) homeodomain transcription factors. The polypeptide is Transcription repressor OFP11 (OFP11) (Arabidopsis thaliana (Mouse-ear cress)).